The primary structure comprises 105 residues: Phosphoribosyl-ATP pyrophosphatase (105 aa).

Belongs to the PRA-PH family.

It is found in the cytoplasm. It carries out the reaction 1-(5-phospho-beta-D-ribosyl)-ATP + H2O = 1-(5-phospho-beta-D-ribosyl)-5'-AMP + diphosphate + H(+). It participates in amino-acid biosynthesis; L-histidine biosynthesis; L-histidine from 5-phospho-alpha-D-ribose 1-diphosphate: step 2/9. In Methylococcus capsulatus (strain ATCC 33009 / NCIMB 11132 / Bath), this protein is Phosphoribosyl-ATP pyrophosphatase.